The chain runs to 435 residues: Secreted RxLR effector protein 35 (435 aa).

Residues 1-22 form the signal peptide; the sequence is MRGAYYIIIALCVVASSQVAAG. Residues 48–65 carry the RxLR-dEER motif; that stretch reads RFLRGSRVVHDDLANEER. The tract at residues 336 to 357 is disordered; it reads RPKRTTDGNTGTISLPTKPTKT. Polar residues predominate over residues 342 to 354; it reads DGNTGTISLPTKP.

It belongs to the RxLR effector family.

Its subcellular location is the secreted. The protein resides in the host nucleus. Secreted effector that acts as an elicitor that induces cell death in host plant cells. This chain is Secreted RxLR effector protein 35, found in Plasmopara viticola (Downy mildew of grapevine).